The chain runs to 162 residues: Methyl-coenzyme M reductase II operon protein D (162 aa).

MCR is composed of three subunits: alpha, beta, and gamma. The function of protein D is not known.

This chain is Methyl-coenzyme M reductase II operon protein D (mrtD), found in Methanothermobacter thermautotrophicus (strain ATCC 29096 / DSM 1053 / JCM 10044 / NBRC 100330 / Delta H) (Methanobacterium thermoautotrophicum).